The chain runs to 192 residues: Thymidine kinase (192 aa).

ATP contacts are provided by residues 9-16 and 87-90; these read ASMNAGKS and DEAQ. Glu-88 acts as the Proton acceptor in catalysis. Zn(2+) contacts are provided by Cys-145, Cys-147, Cys-182, and His-185.

The protein belongs to the thymidine kinase family. Homotetramer.

The protein resides in the cytoplasm. The enzyme catalyses thymidine + ATP = dTMP + ADP + H(+). This chain is Thymidine kinase, found in Novosphingobium aromaticivorans (strain ATCC 700278 / DSM 12444 / CCUG 56034 / CIP 105152 / NBRC 16084 / F199).